The primary structure comprises 660 residues: Histone deacetylase 5 (660 aa).

An N-acetylalanine modification is found at Ala2. Residues 26–349 are histone deacetylase; it reads KVGLIYDETM…SLACVQVLLE (324 aa). Catalysis depends on His158, which acts as the Proton donor/acceptor. Positions 198, 200, and 291 each coordinate Zn(2+).

This sequence belongs to the histone deacetylase family. HD type 2 subfamily. As to quaternary structure, interacts with HDA6. Zn(2+) is required as a cofactor. As to expression, expressed in stems, leaves, flowers, siliques and mature seeds.

It localises to the nucleus. Its subcellular location is the cytoplasm. It carries out the reaction N(6)-acetyl-L-lysyl-[histone] + H2O = L-lysyl-[histone] + acetate. With respect to regulation, inhibited by trichostatin A (TSA), a well-known histone deacetylase inhibitor. Responsible for the deacetylation of lysine residues on the N-terminal part of the core histones (H2A, H2B, H3 and H4). Histone deacetylation gives a tag for epigenetic repression and plays an important role in transcriptional regulation, cell cycle progression and developmental events. Histone deacetylases act via the formation of large multiprotein complexes. Involved in the regulation of flowering time by repressing FLC and AGL27/MAF1 expression. Forms a histone deacetylase complex with HDA6, FLD and MSI4/FVE that represses FLC gene expression to control flowering time. Unlike its tandem duplication HDA18, HDA5 does not seem to be required for the cellular patterning in the root epidermis. The polypeptide is Histone deacetylase 5 (Arabidopsis thaliana (Mouse-ear cress)).